The following is a 363-amino-acid chain: Pyruvate dehydrogenase E1 component subunit alpha, mitochondrial (363 aa).

The N-terminal 2 residues, 1 to 2, are a transit peptide targeting the mitochondrion; it reads RN. The residue at position 36 (lysine 36) is an N6-acetyllysine; alternate. Lysine 36 is subject to N6-succinyllysine; alternate. Residues histidine 65, tyrosine 91, arginine 92, alanine 130, glycine 138, valine 140, aspartate 169, glycine 170, alanine 171, asparagine 198, and tyrosine 200 each coordinate pyruvate. Positions 91 and 92 each coordinate thiamine diphosphate. Residues glycine 138, valine 140, aspartate 169, glycine 170, alanine 171, and asparagine 198 each contribute to the thiamine diphosphate site. Aspartate 169 serves as a coordination point for Mg(2+). Mg(2+)-binding residues include asparagine 198 and tyrosine 200. Position 205 is a phosphoserine; by PDK1 (serine 205). Residue lysine 217 is modified to N6-acetyllysine; alternate. Lysine 217 bears the N6-succinyllysine; alternate mark. At lysine 240 the chain carries N6-acetyllysine. Lysine 250 carries the N6-succinyllysine modification. Residue histidine 265 coordinates thiamine diphosphate. Serine 266 carries the post-translational modification Phosphoserine; by PDK1, PDK2, PDK3 and PDK4. Serine 268 is subject to Phosphoserine. A Phosphoserine; by PDK1, PDK2, PDK3 and PDK4 modification is found at serine 273. Phosphotyrosine is present on tyrosine 274. Lysine 286 carries the post-translational modification N6-acetyllysine; alternate. Lysine 286 carries the N6-succinyllysine; alternate modification. N6-acetyllysine is present on residues lysine 294 and lysine 309. Lysine 358 is modified (N6-succinyllysine).

As to quaternary structure, heterotetramer of two PDHA1 and two PDHB subunits. The heterotetramer interacts with DLAT, and is part of the multimeric pyruvate dehydrogenase complex that contains multiple copies of pyruvate dehydrogenase (E1), dihydrolipoamide acetyltransferase (DLAT, E2) and lipoamide dehydrogenase (DLD, E3). These subunits are bound to an inner core composed of about 48 DLAT and 12 PDHX molecules. Thiamine diphosphate is required as a cofactor. Requires Mg(2+) as cofactor. In terms of processing, phosphorylation at Ser-205, Ser-266 and Ser-273 by PDK family kinases inactivates the enzyme; for this phosphorylation at a single site is sufficient. Phosphorylation at Ser-266 interferes with access to active site, and thereby inactivates the enzyme. Dephosphorylation at all three sites, i.e. at Ser-205, Ser-266 and Ser-273, is required for reactivation. Acetylation alters the phosphorylation pattern. Deacetylated by SIRT3.

It is found in the mitochondrion matrix. It carries out the reaction N(6)-[(R)-lipoyl]-L-lysyl-[protein] + pyruvate + H(+) = N(6)-[(R)-S(8)-acetyldihydrolipoyl]-L-lysyl-[protein] + CO2. Pyruvate dehydrogenase activity is inhibited by phosphorylation of PDHA1; it is reactivated by dephosphorylation. In terms of biological role, the pyruvate dehydrogenase complex catalyzes the overall conversion of pyruvate to acetyl-CoA and CO(2), and thereby links the glycolytic pathway to the tricarboxylic cycle. This Sminthopsis macroura (Stripe-faced dunnart) protein is Pyruvate dehydrogenase E1 component subunit alpha, mitochondrial (PDHA).